The primary structure comprises 130 residues: Small ribosomal subunit protein uS9 (130 aa).

This sequence belongs to the universal ribosomal protein uS9 family.

This chain is Small ribosomal subunit protein uS9, found in Phytoplasma australiense.